The sequence spans 679 residues: UvrABC system protein B (679 aa).

Residues 25 to 176 (KGVNTGKEFQ…NLRSYLRSLV (152 aa)) enclose the Helicase ATP-binding domain. 38 to 45 (GATGTGKT) contributes to the ATP binding site. Residues 91 to 114 (YYDYYQPEAYVPVSDTYIAKTASI) carry the Beta-hairpin motif. The Helicase C-terminal domain maps to 429–583 (QIEDLLSEIR…KKYNQVNGIT (155 aa)). Residues 639–674 (PDLIEKLEIKMKDAAKELNFEEAANLRDRIKKLRQK) enclose the UVR domain.

Belongs to the UvrB family. Forms a heterotetramer with UvrA during the search for lesions. Interacts with UvrC in an incision complex.

The protein localises to the cytoplasm. In terms of biological role, the UvrABC repair system catalyzes the recognition and processing of DNA lesions. A damage recognition complex composed of 2 UvrA and 2 UvrB subunits scans DNA for abnormalities. Upon binding of the UvrA(2)B(2) complex to a putative damaged site, the DNA wraps around one UvrB monomer. DNA wrap is dependent on ATP binding by UvrB and probably causes local melting of the DNA helix, facilitating insertion of UvrB beta-hairpin between the DNA strands. Then UvrB probes one DNA strand for the presence of a lesion. If a lesion is found the UvrA subunits dissociate and the UvrB-DNA preincision complex is formed. This complex is subsequently bound by UvrC and the second UvrB is released. If no lesion is found, the DNA wraps around the other UvrB subunit that will check the other stand for damage. The protein is UvrABC system protein B of Prochlorococcus marinus (strain MIT 9301).